A 281-amino-acid chain; its full sequence is Auxin-responsive protein IAA19 (281 aa).

The EAR-like (transcriptional repression) motif lies at 40–44 (LRLGL). Positions 66 to 126 (LGPAPPPRGG…AAGAPRAAKA (61 aa)) are disordered. Positions 79-91 (GFVDSLDRSEGRR) are enriched in basic and acidic residues. The span at 114–126 (GEAAAGAPRAAKA) shows a compositional bias: low complexity. The PB1 domain maps to 161–265 (CCYVKVSMDG…RKLRIMRGSD (105 aa)).

This sequence belongs to the Aux/IAA family. In terms of assembly, homodimers and heterodimers. As to expression, expressed in etiolated seedlings and flowers.

It is found in the nucleus. In terms of biological role, aux/IAA proteins are short-lived transcriptional factors that function as repressors of early auxin response genes at low auxin concentrations. The sequence is that of Auxin-responsive protein IAA19 (IAA19) from Oryza sativa subsp. japonica (Rice).